The chain runs to 1104 residues: Lon protease homolog, mitochondrial (1104 aa).

Residues 1–58 (MLPLRAFARLAQRPRLSRPTQLARSSLPRPSPSRPAAHYLALAPAPSTRFLHSSPPVL) constitute a mitochondrion transit peptide. A disordered region spans residues 8-144 (ARLAQRPRLS…PGAGGPKEVA (137 aa)). Low complexity predominate over residues 22–46 (LARSSLPRPSPSRPAAHYLALAPAP). The span at 80-103 (KQDDQVEKPLPDAESSKSAEERAK) shows a compositional bias: basic and acidic residues. Low complexity predominate over residues 104-128 (SQSSKPDIKASSSDSVSSSAPAPGS). Positions 129–139 (ADGGSPPGAGG) are enriched in gly residues. One can recognise a Lon N-terminal domain in the interval 155–444 (VLAIPITHRP…RALVLLKKEL (290 aa)). 597-604 (GPPGVGKT) lines the ATP pocket. Residues 895-1082 (SPPAGVSTGL…RQVLHEAFRG (188 aa)) form the Lon proteolytic domain. Active-site residues include Ser987 and Lys1030.

Belongs to the peptidase S16 family. In terms of assembly, homohexamer or homoheptamer. Organized in a ring with a central cavity.

Its subcellular location is the mitochondrion matrix. It catalyses the reaction Hydrolysis of proteins in presence of ATP.. In terms of biological role, ATP-dependent serine protease that mediates the selective degradation of misfolded, unassembled or oxidatively damaged polypeptides as well as certain short-lived regulatory proteins in the mitochondrial matrix. May also have a chaperone function in the assembly of inner membrane protein complexes. Participates in the regulation of mitochondrial gene expression and in the maintenance of the integrity of the mitochondrial genome. Binds to mitochondrial DNA in a site-specific manner. The polypeptide is Lon protease homolog, mitochondrial (Cryptococcus neoformans var. neoformans serotype D (strain B-3501A) (Filobasidiella neoformans)).